We begin with the raw amino-acid sequence, 249 residues long: MGVWLLSLITVLLSLALETAGQGERIIDGYKCKEGSHPWQVALLKGNQLHCGGVLVDKYWVLTAAHCKMGQYQVQLGSDKIGDQSAQKIKATKSFRHPGYSTKTHVNDIMLVRLDEPVKMSSKVEAVQLPEHCEPPGTSCTVSGWGTTTSPDVTFPSDLMCSDVKLISSRECKKVYKDLLGKTMLCAGIPDSKTNTCNGDSGGPLVCNDTLQGLVSWGTYPCGQPNDPGVYTQVCKYKRWVMETMKTHR.

Positions 1–21 (MGVWLLSLITVLLSLALETAG) are cleaved as a signal peptide. Positions 22–25 (QGER) are cleaved as a propeptide — activation peptide. Residues 26–246 (IIDGYKCKEG…YKRWVMETMK (221 aa)) are serine protease. 6 cysteine pairs are disulfide-bonded: Cys32/Cys161, Cys51/Cys67, Cys133/Cys235, Cys140/Cys207, Cys172/Cys186, and Cys197/Cys222. Active-site charge relay system residues include His66 and Asp108. The Charge relay system role is filled by Ser201.

This sequence belongs to the peptidase S1 family. Kallikrein subfamily. As to expression, expressed in skin and, at lower levels, in lung, kidney, brain, heart and spleen. In skin, expressed in high suprabasal keratinocytes and in the luminal parts of hair follicles. Not detected in liver and skeletal muscle.

It is found in the secreted. The enzyme catalyses Cleavage of proteins with aromatic side chains in the P1 position.. Its activity is regulated as follows. Inhibited by Zn2+ and Cu2+ at low micromolar concentrations. Inhibited by SERPINA12. Its function is as follows. May catalyze the degradation of intercellular cohesive structures in the cornified layer of the skin in the continuous shedding of cells from the skin surface. Specific for amino acid residues with aromatic side chains in the P1 position. Cleaves insulin A chain at '14-Tyr-|-Gln-15' and insulin B chain at '6-Leu-|-Cys-7', '16-Tyr-|-Leu-17', '25-Phe-|-Tyr-26' and '26-Tyr-|-Thr-27'. Could play a role in the activation of precursors to inflammatory cytokines. The polypeptide is Kallikrein-7 (Klk7) (Mus musculus (Mouse)).